A 316-amino-acid polypeptide reads, in one-letter code: Ribosomal protein L11 methyltransferase (316 aa).

S-adenosyl-L-methionine-binding residues include Thr-157, Gly-178, Asp-200, and Asn-243.

This sequence belongs to the methyltransferase superfamily. PrmA family.

The protein resides in the cytoplasm. It carries out the reaction L-lysyl-[protein] + 3 S-adenosyl-L-methionine = N(6),N(6),N(6)-trimethyl-L-lysyl-[protein] + 3 S-adenosyl-L-homocysteine + 3 H(+). Functionally, methylates ribosomal protein L11. The sequence is that of Ribosomal protein L11 methyltransferase from Streptococcus pneumoniae (strain ATCC 700669 / Spain 23F-1).